A 132-amino-acid polypeptide reads, in one-letter code: Transcription antitermination protein NusB (132 aa).

This sequence belongs to the NusB family.

In terms of biological role, involved in transcription antitermination. Required for transcription of ribosomal RNA (rRNA) genes. Binds specifically to the boxA antiterminator sequence of the ribosomal RNA (rrn) operons. This chain is Transcription antitermination protein NusB, found in Campylobacter jejuni subsp. jejuni serotype O:6 (strain 81116 / NCTC 11828).